The sequence spans 198 residues: Protein uvp1 (198 aa).

The 140-residue stretch at 1–140 (MIIGYARKST…SGLAAARARG (140 aa)) folds into the Resolvase/invertase-type recombinase catalytic domain. Ser-9 acts as the O-(5'-phospho-DNA)-serine intermediate in catalysis. Residues 168–187 (VGAVAKRFNVSRMTIYRYTT) constitute a DNA-binding region (H-T-H motif).

This sequence belongs to the site-specific recombinase resolvase family.

Its function is as follows. Cooperates with the mucAB genes in the DNA repair process. Could be a resolvase-invertase protein. This chain is Protein uvp1 (uvp1), found in Escherichia coli.